Consider the following 350-residue polypeptide: Formimidoylglutamase (350 aa).

Residues His130, Asp165, His167, Asp169, Asp269, and Asp271 each contribute to the Mn(2+) site.

The protein belongs to the arginase family. Requires Mn(2+) as cofactor.

The enzyme catalyses N-formimidoyl-L-glutamate + H2O = formamide + L-glutamate. It participates in amino-acid degradation; L-histidine degradation into L-glutamate; L-glutamate from N-formimidoyl-L-glutamate (hydrolase route): step 1/1. Functionally, catalyzes the conversion of N-formimidoyl-L-glutamate to L-glutamate and formamide. This is Formimidoylglutamase from Aliivibrio fischeri (strain ATCC 700601 / ES114) (Vibrio fischeri).